We begin with the raw amino-acid sequence, 433 residues long: Homoserine dehydrogenase (433 aa).

2 residues coordinate NADPH: Thr13 and Val14. The NAD(+) site is built by Val14 and Val33. Val14 contacts NADP(+). 2 residues coordinate NADPH: Lys45 and Lys105. NADP(+) contacts are provided by Lys45 and Lys105. The Na(+) site is built by Glu129, Val132, Gly134, and Ile136. The NADP(+) site is built by Gly187 and Glu190. Residues Glu190 and Asp201 each coordinate L-homoserine. Catalysis depends on Lys205, which acts as the Proton donor. Gly302 lines the NADPH pocket. Position 302 (Gly302) interacts with NAD(+). An NADP(+)-binding site is contributed by Gly302. An ACT domain is found at 350-426 (FLRIHVKDEV…VVQEVKSTYR (77 aa)).

The protein belongs to the homoserine dehydrogenase family. Homotetramer. Requires a metal cation as cofactor.

The protein localises to the cytoplasm. It localises to the secreted. It catalyses the reaction L-homoserine + NADP(+) = L-aspartate 4-semialdehyde + NADPH + H(+). It participates in amino-acid biosynthesis; L-methionine biosynthesis via de novo pathway; L-homoserine from L-aspartate: step 3/3. It functions in the pathway amino-acid biosynthesis; L-threonine biosynthesis; L-threonine from L-aspartate: step 3/5. With respect to regulation, feedback inhibition by threonine. Activated by sodium ions. In terms of biological role, catalyzes the conversion of L-aspartate-beta-semialdehyde (L-Asa) to L-homoserine (L-Hse), the third step in the biosynthesis of threonine and methionine from aspartate. Utilizes NADPH but not NADH as coenzyme. In Bacillus subtilis (strain 168), this protein is Homoserine dehydrogenase (hom).